The sequence spans 104 residues: SPbeta prophage-derived stress response protein SCP1 (104 aa).

Its subcellular location is the cytoplasm. This Bacillus subtilis (strain 168) protein is SPbeta prophage-derived stress response protein SCP1 (yorD).